A 231-amino-acid polypeptide reads, in one-letter code: Phosphoglycolate phosphatase (231 aa).

The active-site Nucleophile is D9. Residues D9 and D11 each coordinate Mg(2+). The active-site Proton donor is D11. A substrate-binding site is contributed by K154. Residues D177 and D181 each contribute to the Mg(2+) site.

It belongs to the archaeal SPP-like hydrolase family. As to quaternary structure, homodimer. Requires Mg(2+) as cofactor.

It catalyses the reaction 2-phosphoglycolate + H2O = glycolate + phosphate. Functionally, catalyzes the dephosphorylation of 2-phosphoglycolate. Has phosphatase activity towards p-nitrophenylphosphate (in vitro). This is Phosphoglycolate phosphatase from Pyrococcus horikoshii (strain ATCC 700860 / DSM 12428 / JCM 9974 / NBRC 100139 / OT-3).